A 28-amino-acid polypeptide reads, in one-letter code: Taicatoxin, alpha-neurotoxin-like component (28 aa).

Cysteines 3 and 21 form a disulfide.

It belongs to the three-finger toxin family. Long-chain subfamily. Type II alpha-neurotoxin sub-subfamily. As to quaternary structure, heterotrimer composed of this alpha-neurotoxin-like peptide of 8 kDa, a neurotoxic phospholipase of 16 kDa (AC Q7LZG2) and a serine protease inhibitor of 7 kDa (AC B7S4N9) at an approximate stoichiometry of 1:1:4; non-covalently linked. In terms of tissue distribution, expressed by the venom gland.

It is found in the secreted. In terms of biological role, the heterotrimer blocks the voltage-dependent L-type calcium channels (Cav1/CACNA1) from the heart, and the small conductance calcium-activated potassium channels (KCa2/KCNN) in the chromaffin cells and in the brain. Is very toxic to mice. The chain is Taicatoxin, alpha-neurotoxin-like component from Oxyuranus scutellatus scutellatus (Australian taipan).